Consider the following 241-residue polypeptide: 1-(5-phosphoribosyl)-5-[(5-phosphoribosylamino)methylideneamino] imidazole-4-carboxamide isomerase (241 aa).

The Proton acceptor role is filled by D10. D131 (proton donor) is an active-site residue.

This sequence belongs to the HisA/HisF family.

Its subcellular location is the cytoplasm. It carries out the reaction 1-(5-phospho-beta-D-ribosyl)-5-[(5-phospho-beta-D-ribosylamino)methylideneamino]imidazole-4-carboxamide = 5-[(5-phospho-1-deoxy-D-ribulos-1-ylimino)methylamino]-1-(5-phospho-beta-D-ribosyl)imidazole-4-carboxamide. It participates in amino-acid biosynthesis; L-histidine biosynthesis; L-histidine from 5-phospho-alpha-D-ribose 1-diphosphate: step 4/9. The polypeptide is 1-(5-phosphoribosyl)-5-[(5-phosphoribosylamino)methylideneamino] imidazole-4-carboxamide isomerase (Bifidobacterium longum (strain NCC 2705)).